We begin with the raw amino-acid sequence, 259 residues long: DNA-directed RNA polymerase 30 kDa polypeptide (259 aa).

The TFIIS-type zinc-finger motif lies at 155-195 (YNTPCPNCKSRNTTPMMIQTRAADEPPLVRHACRDCKQHFK). Zn(2+) is bound by residues Cys-159, Cys-162, Cys-187, and Cys-190. The interval 220-259 (EILPDNNPSPPESPEPASPIDDGLIRATFDRNDEPPEDDE) is disordered. Pro residues predominate over residues 226–236 (NPSPPESPEPA).

Belongs to the poxviridae DNA-directed RNA polymerase 30 kDa subunit family. As to quaternary structure, the DNA-dependent RNA polymerase (vRNAP) consists of eight subunits encoded by early viral genes and termed according to their apparent molecular masses Rpo147, Rpo132, Rpo35, Rpo30, Rpo22, Rpo19, Rpo18, and Rpo7. The same holoenzyme, with the addition of the transcription-specificity factor RAP94, is used for early gene expression.

The protein localises to the virion. Its subcellular location is the host cytoplasm. The enzyme catalyses RNA(n) + a ribonucleoside 5'-triphosphate = RNA(n+1) + diphosphate. Part of the DNA-dependent RNA polymerase which catalyzes the transcription of viral DNA into RNA using the four ribonucleoside triphosphates as substrates. Responsible for the transcription of early, intermediate and late genes. DNA-dependent RNA polymerase associates with the early transcription factor (ETF), itself composed of OPG118 and OPG134, thereby allowing the early genes transcription. Late transcription, and probably also intermediate transcription, require newly synthesized RNA polymerase. In Bos taurus (Bovine), this protein is DNA-directed RNA polymerase 30 kDa polypeptide (OPG066).